We begin with the raw amino-acid sequence, 848 residues long: Oligopeptide transport ATP-binding protein OppF (848 aa).

The ABC transporter domain occupies 13–785 (VKALSMMFKV…PVHPYTRSLI (773 aa)). 47–54 (GESGSGKS) is an ATP binding site.

It belongs to the ABC transporter superfamily. As to quaternary structure, the complex is composed of two ATP-binding proteins (OppD and OppF), two transmembrane proteins (OppB and OppC) and a solute-binding protein (OppA).

Its subcellular location is the cell membrane. The enzyme catalyses a [peptide](out) + ATP + H2O = a [peptide](in) + ADP + phosphate + H(+). Its function is as follows. Part of the ABC transporter complex OppABCDF involved in the uptake of oligopeptides. Probably responsible for energy coupling to the transport system. The protein is Oligopeptide transport ATP-binding protein OppF (oppF) of Mycoplasma genitalium (strain ATCC 33530 / DSM 19775 / NCTC 10195 / G37) (Mycoplasmoides genitalium).